The primary structure comprises 253 residues: Chemokine-binding protein (253 aa).

Positions 1 to 17 (MKQYIVLACMCLAAAAM) are cleaved as a signal peptide. Residues 62 to 87 (TEITESESDPEVESEDDSTSVEDVDP) form a disordered region. The segment covering 65-86 (TESESDPEVESEDDSTSVEDVD) has biased composition (acidic residues).

This sequence belongs to the orthopoxvirus OPG001 family. Binds to host CC chemokines, such as RANTES/CCL5, MIP-1alpha/CCL3, MCP-1/CCL2 and eotaxin.

It is found in the secreted. Inhibits host immune defense by binding to host chemokines. Binds host CC chemokines (beta chemokines) such as RANTES with high affinity, but not CXC or C chemokines (alpha and gamma chemokines). The protein is Chemokine-binding protein (OPG001) of Variola virus (isolate Human/India/Ind3/1967) (VARV).